Here is a 252-residue protein sequence, read N- to C-terminus: Endonuclease NucS (252 aa).

Belongs to the NucS endonuclease family.

It localises to the cytoplasm. In terms of biological role, cleaves both 3' and 5' ssDNA extremities of branched DNA structures. In Thermococcus kodakarensis (strain ATCC BAA-918 / JCM 12380 / KOD1) (Pyrococcus kodakaraensis (strain KOD1)), this protein is Endonuclease NucS.